The chain runs to 156 residues: Small ribosomal subunit protein uS7 (156 aa).

This sequence belongs to the universal ribosomal protein uS7 family. In terms of assembly, part of the 30S ribosomal subunit. Contacts proteins S9 and S11.

In terms of biological role, one of the primary rRNA binding proteins, it binds directly to 16S rRNA where it nucleates assembly of the head domain of the 30S subunit. Is located at the subunit interface close to the decoding center, probably blocks exit of the E-site tRNA. This chain is Small ribosomal subunit protein uS7, found in Alkalilimnicola ehrlichii (strain ATCC BAA-1101 / DSM 17681 / MLHE-1).